A 763-amino-acid polypeptide reads, in one-letter code: G protein-regulated inducer of neurite outgrowth 3 (763 aa).

Disordered regions lie at residues 1-48 (MGTV…IGNV), 65-111 (QACV…APGL), and 192-268 (ENSQ…GATC). Polar residues predominate over residues 27–44 (ESQSVSPQPAQPDNNASG). Positions 93–104 (KTPDDFLLHGSK) are enriched in basic and acidic residues. Residues 237 to 250 (ENKQPSATALNTTA) are compositionally biased toward polar residues. Phosphoserine is present on residues serine 323 and serine 359. Disordered stretches follow at residues 420–452 (TSSQNTETEEDLRLSASKEATSRQPEGTNPDFQ), 471–624 (NQGL…PRRG), and 711–737 (VKTQSGQTRRSISSDSSSSKKLKGRQH). Residues 437–450 (KEATSRQPEGTNPD) show a composition bias toward polar residues. Composition is skewed to basic and acidic residues over residues 480 to 496 (REPEIVVKTAKDHKAES) and 518 to 539 (PTDKKGAKDKKPASPLIVKDHA). The segment covering 593-609 (SLSLPSDGTGDSSPGSG) has biased composition (low complexity).

Its function is as follows. May be involved in neurite outgrowth. This chain is G protein-regulated inducer of neurite outgrowth 3 (Gprin3), found in Mus musculus (Mouse).